A 149-amino-acid chain; its full sequence is D-aminoacyl-tRNA deacylase (149 aa).

The Gly-cisPro motif, important for rejection of L-amino acids signature appears at 137-138; that stretch reads GP.

Belongs to the DTD family. Homodimer.

The protein resides in the cytoplasm. It catalyses the reaction glycyl-tRNA(Ala) + H2O = tRNA(Ala) + glycine + H(+). The catalysed reaction is a D-aminoacyl-tRNA + H2O = a tRNA + a D-alpha-amino acid + H(+). Functionally, an aminoacyl-tRNA editing enzyme that deacylates mischarged D-aminoacyl-tRNAs. Also deacylates mischarged glycyl-tRNA(Ala), protecting cells against glycine mischarging by AlaRS. Acts via tRNA-based rather than protein-based catalysis; rejects L-amino acids rather than detecting D-amino acids in the active site. By recycling D-aminoacyl-tRNA to D-amino acids and free tRNA molecules, this enzyme counteracts the toxicity associated with the formation of D-aminoacyl-tRNA entities in vivo and helps enforce protein L-homochirality. In Caldicellulosiruptor bescii (strain ATCC BAA-1888 / DSM 6725 / KCTC 15123 / Z-1320) (Anaerocellum thermophilum), this protein is D-aminoacyl-tRNA deacylase.